Reading from the N-terminus, the 431-residue chain is Adenylosuccinate synthetase (431 aa).

GTP is bound by residues 12 to 18 (GDEGKGK) and 40 to 42 (GHT). The active-site Proton acceptor is the D13. Mg(2+)-binding residues include D13 and G40. Residues 13–16 (DEGK), 38–41 (NAGH), T129, R143, Q224, and T239 each bind IMP. Catalysis depends on H41, which acts as the Proton donor. K292 is covalently cross-linked (Isoglutamyl lysine isopeptide (Lys-Gln) (interchain with Q-Cter in protein Pup)). 299-305 (VTTGRAR) contacts substrate. R303 contacts IMP. Residues R305, 331–333 (KLD), and 413–415 (GVG) contribute to the GTP site.

It belongs to the adenylosuccinate synthetase family. As to quaternary structure, homodimer. It depends on Mg(2+) as a cofactor.

It is found in the cytoplasm. It carries out the reaction IMP + L-aspartate + GTP = N(6)-(1,2-dicarboxyethyl)-AMP + GDP + phosphate + 2 H(+). It participates in purine metabolism; AMP biosynthesis via de novo pathway; AMP from IMP: step 1/2. Its function is as follows. Plays an important role in the de novo pathway of purine nucleotide biosynthesis. Catalyzes the first committed step in the biosynthesis of AMP from IMP. This chain is Adenylosuccinate synthetase, found in Mycolicibacterium smegmatis (strain ATCC 700084 / mc(2)155) (Mycobacterium smegmatis).